The sequence spans 429 residues: Acetyltransferase pyr8 (429 aa).

9 helical membrane-spanning segments follow: residues 12-32 (IAQELALYLAFTVPTAFVIIT), 39-56 (LRLAWTPCLLYILYRFSL), 69-89 (GVAAGQATVAALQCLNLLLIT), 154-174 (YVLRESAIIIWQYLLLDLIHM), 221-241 (VCLNIVSRIYCLVLVVLRISA), 300-320 (IFFTFFTSAVLHLACDAILGI), 324-344 (GSGAMPFFCVVPLAIMFEDGV), 365-385 (LVGFLWVGSWMYATSPWYLYP), and 409-429 (VAQKVLLVYGVVLYWAIGGEI).

Belongs to the wax synthase family.

It localises to the membrane. The protein operates within secondary metabolite biosynthesis; terpenoid biosynthesis. Acetyltransferase; part of the gene cluster that mediates the biosynthesis of pyripyropene A, a specific human acyl-coenzyme A:cholesterol acyltransferase 2 inhibitor. The first step of the pathway is the synthesis of nicotinyl-CoA from nicotinic acid by the nicotinic acid-CoA ligase pyr1. Nicotinyl-CoA is then a substrate of polyketide synthase pyr2 to produce 4-hydroxy-6-(3-pyridinyl)-2H-pyran-2-one (HPPO) which is further prenylated by the polyprenyl transferase pyr6 to yield farnesyl-HPPO. The next steps consist of an epoxidation of farnesyl-HPPO to epoxyfarnesyl-HPPO by FAD-dependent monooxygenase pyr5 and a cyclization of the terpenoid portion by the terpene cyclase pyr4 to yield deacetyl-pyripyropene E. The 2 cytochrome P450 monooxygenases pyr3 and pyr9, and the 2 acetyltransferases pyr7 and pyr8 are involved in the conversion of deacetyl-pyripyropene E into pyripyropene A through several cycles of oxidation and acetylation steps. Pyr7 acetylates deacetyl-pyripyropene E to pyripyropene E which is oxidized to 11-deacetyl-pyripyropene O by pyr3, which is in turn acetylated into pyripyropene O by pyr8. Pyripyropene O is then oxidized to deacetyl-pyripyropene A by pyr9. Deacetyl-pyripyropene A is finally acetylated to pyripyropene A by pyr8. This chain is Acetyltransferase pyr8, found in Aspergillus fumigatus (strain ATCC MYA-4609 / CBS 101355 / FGSC A1100 / Af293) (Neosartorya fumigata).